Reading from the N-terminus, the 182-residue chain is Transcription termination/antitermination protein NusG (182 aa).

The KOW domain maps to 131–161 (GEVVRVNEGPFADFNGTVEEVDYEKSRLKVS).

The protein belongs to the NusG family.

Its function is as follows. Participates in transcription elongation, termination and antitermination. This is Transcription termination/antitermination protein NusG from Vibrio parahaemolyticus serotype O3:K6 (strain RIMD 2210633).